The primary structure comprises 65 residues: Large ribosomal subunit protein bL35 (65 aa).

It belongs to the bacterial ribosomal protein bL35 family.

This is Large ribosomal subunit protein bL35 from Erwinia tasmaniensis (strain DSM 17950 / CFBP 7177 / CIP 109463 / NCPPB 4357 / Et1/99).